The sequence spans 635 residues: Extracellular metalloproteinase MEP (635 aa).

The first 19 residues, 1–19 (MRAFLLASLASLPAVNVYA), serve as a signal peptide directing secretion. Positions 20–244 (HPTHNSRGLT…VHAVVDYAAE (225 aa)) are excised as a propeptide. Asn287, Asn302, and Asn336 each carry an N-linked (GlcNAc...) asparagine glycan. Position 429 (His429) interacts with Zn(2+). The active site involves Glu430. A Zn(2+)-binding site is contributed by His433.

This sequence belongs to the peptidase M36 family. The cofactor is Zn(2+).

It is found in the secreted. In terms of biological role, secreted metalloproteinase that allows assimilation of proteinaceous substrates. The protein is Extracellular metalloproteinase MEP (MEP) of Leptosphaeria maculans (strain JN3 / isolate v23.1.3 / race Av1-4-5-6-7-8) (Blackleg fungus).